We begin with the raw amino-acid sequence, 121 residues long: Large ribosomal subunit protein bL20 (121 aa).

Belongs to the bacterial ribosomal protein bL20 family.

Its function is as follows. Binds directly to 23S ribosomal RNA and is necessary for the in vitro assembly process of the 50S ribosomal subunit. It is not involved in the protein synthesizing functions of that subunit. This Chlamydia caviae (strain ATCC VR-813 / DSM 19441 / 03DC25 / GPIC) (Chlamydophila caviae) protein is Large ribosomal subunit protein bL20.